A 962-amino-acid polypeptide reads, in one-letter code: Leucine--tRNA ligase (962 aa).

Residues 40-51 carry the 'HIGH' region motif; it reads PYPSGAGLHVGH. The short motif at 737 to 741 is the 'KMSKS' region element; sequence KMSKS. Lys-740 provides a ligand contact to ATP.

The protein belongs to the class-I aminoacyl-tRNA synthetase family.

It is found in the cytoplasm. The catalysed reaction is tRNA(Leu) + L-leucine + ATP = L-leucyl-tRNA(Leu) + AMP + diphosphate. This Flavobacterium psychrophilum (strain ATCC 49511 / DSM 21280 / CIP 103535 / JIP02/86) protein is Leucine--tRNA ligase.